Reading from the N-terminus, the 830-residue chain is Serine/threonine-protein kinase pkn2 (830 aa).

Topologically, residues 1 to 605 (MLAPDSLVLD…GELLRQRRRE (605 aa)) are cytoplasmic. The region spanning 13–283 (FRVLRPLGSG…DALAAAHSAL (271 aa)) is the Protein kinase domain. Residues 19 to 27 (LGSGGMGEV) and K42 each bind ATP. Residue D135 is the Proton acceptor of the active site. Positions 296–326 (VPQPGSGATPSSGTSVFGTGSASGSSSGPTG) are disordered. The segment covering 299–326 (PGSGATPSSGTSVFGTGSASGSSSGPTG) has biased composition (low complexity). The region spanning 396–511 (TVMLTDIQGF…EPMEVIEAVE (116 aa)) is the Guanylate cyclase domain. A helical membrane pass occupies residues 606-623 (AALVAGAVVLLGAGAAWL). Over 624 to 830 (SQRNDAGTRA…AIKSLKQKSD (207 aa)) the chain is Periplasmic.

The protein belongs to the protein kinase superfamily. Ser/Thr protein kinase family.

It is found in the cell membrane. It catalyses the reaction L-seryl-[protein] + ATP = O-phospho-L-seryl-[protein] + ADP + H(+). The enzyme catalyses L-threonyl-[protein] + ATP = O-phospho-L-threonyl-[protein] + ADP + H(+). In terms of biological role, regulates the activity of endogenous beta-lactamase or related enzymes, by blocking their secretion by phosphorylation, in response to an external signal yet to be identified. The polypeptide is Serine/threonine-protein kinase pkn2 (pkn2) (Myxococcus xanthus).